Here is a 280-residue protein sequence, read N- to C-terminus: Phosphatidylinositol N-acetylglucosaminyltransferase GPI2 subunit (280 aa).

Residues methionine 1 to arginine 53 are Cytoplasmic-facing. Residues leucine 54 to threonine 74 traverse the membrane as a helical segment. Position 75 (tyrosine 75) is a topological domain, extracellular. The helical transmembrane segment at isoleucine 76 to isoleucine 96 threads the bilayer. The Cytoplasmic segment spans residues isoleucine 97 to serine 108. Residues phenylalanine 109–leucine 129 traverse the membrane as a helical segment. The Extracellular segment spans residues lysine 130–threonine 135. Residues threonine 136–isoleucine 156 form a helical membrane-spanning segment. The Cytoplasmic portion of the chain corresponds to serine 157–aspartate 189. A helical membrane pass occupies residues valine 190–valine 210. Over threonine 211–asparagine 220 the chain is Extracellular. The helical transmembrane segment at isoleucine 221–phenylalanine 241 threads the bilayer. Residues alanine 242 to aspartate 280 are Cytoplasmic-facing.

This sequence belongs to the PIGC family. In terms of assembly, component of the phosphatidylinositol N-acetylglucosaminyltransferase (GPI-GlcNAc transferase) complex composed of at least GPI1, GPI2, GPI3, GPI15, GPI19 and ERI1. Interacts with ERI1.

The protein resides in the membrane. The catalysed reaction is a 1,2-diacyl-sn-glycero-3-phospho-(1D-myo-inositol) + UDP-N-acetyl-alpha-D-glucosamine = a 6-(N-acetyl-alpha-D-glucosaminyl)-1-(1,2-diacyl-sn-glycero-3-phospho)-1D-myo-inositol + UDP + H(+). The protein operates within glycolipid biosynthesis; glycosylphosphatidylinositol-anchor biosynthesis. Functionally, part of the complex catalyzing the transfer of N-acetylglucosamine from UDP-N-acetylglucosamine to phosphatidylinositol, the first step of GPI biosynthesis. This is Phosphatidylinositol N-acetylglucosaminyltransferase GPI2 subunit (GPI2) from Saccharomyces cerevisiae (strain ATCC 204508 / S288c) (Baker's yeast).